A 239-amino-acid chain; its full sequence is 3,4-dihydroxyphthalate decarboxylase (239 aa).

Glutamate 84 functions as the Proton donor/acceptor in the catalytic mechanism. Glutamate 84, histidine 103, histidine 105, and histidine 171 together coordinate a divalent metal cation.

The protein belongs to the aldolase class II family. The cofactor is a divalent metal cation.

It catalyses the reaction 3,4-dihydroxyphthalate + H(+) = 3,4-dihydroxybenzoate + CO2. Its pathway is xenobiotic degradation; phthalate degradation. Its function is as follows. Catalyzes the decarboxylation of 3,4-dihydroxyphthalate to protocatechuate (3,4-dihydroxybenzoate) during phthalate metabolism. This is 3,4-dihydroxyphthalate decarboxylase from Terrabacter sp. (strain DBF63).